Here is a 61-residue protein sequence, read N- to C-terminus: MMKDLFTFVMDKNISIDINSDWFKELWYPLSKKCRSNTLFDFKDEVKAPPPPERAVKVWLY.

This Invertebrate iridescent virus 6 (IIV-6) protein is Putative MSV199 domain-containing protein 200R.